We begin with the raw amino-acid sequence, 426 residues long: Glutamate-1-semialdehyde 2,1-aminomutase (426 aa).

Lys-265 bears the N6-(pyridoxal phosphate)lysine mark.

The protein belongs to the class-III pyridoxal-phosphate-dependent aminotransferase family. HemL subfamily. In terms of assembly, homodimer. It depends on pyridoxal 5'-phosphate as a cofactor.

It is found in the cytoplasm. It catalyses the reaction (S)-4-amino-5-oxopentanoate = 5-aminolevulinate. The protein operates within porphyrin-containing compound metabolism; protoporphyrin-IX biosynthesis; 5-aminolevulinate from L-glutamyl-tRNA(Glu): step 2/2. The sequence is that of Glutamate-1-semialdehyde 2,1-aminomutase from Escherichia coli (strain SMS-3-5 / SECEC).